The following is a 270-amino-acid chain: uncharacterized protein (270 aa).

Basic and acidic residues-rich tracts occupy residues 1–13 (MSEF…KDLY) and 49–73 (EVER…KEEK). Disordered regions lie at residues 1–76 (MSEF…KQEE), 90–111 (STSP…PQTE), and 204–270 (KKRR…FRTE). Residues 90–102 (STSPAQEEQGSST) show a composition bias toward polar residues. Over residues 204–216 (KKRRPGQKQRAAK) the composition is skewed to basic residues. Residues 218 to 235 (LALERTKERDTKAREIKK) show a composition bias toward basic and acidic residues. Residues 236–253 (QLKKKFHKRGGKKNKKKV) are compositionally biased toward basic residues.

This is an uncharacterized protein from Saccharomyces cerevisiae (strain ATCC 204508 / S288c) (Baker's yeast).